We begin with the raw amino-acid sequence, 446 residues long: uncharacterized protein (446 aa).

4 helical membrane passes run 69-89 (FWLW…VTYL), 98-118 (FFLV…VWLA), 169-189 (HSLW…LLLV), and 247-267 (GLLV…AWVV).

The protein localises to the membrane. This is an uncharacterized protein from Neisseria meningitidis serogroup B (strain ATCC BAA-335 / MC58).